Here is a 258-residue protein sequence, read N- to C-terminus: Bidirectional sugar transporter SWEET9 (258 aa).

Residues methionine 1 to glutamate 7 lie on the Extracellular side of the membrane. Residues isoleucine 8 to valine 28 form a helical membrane-spanning segment. The region spanning phenylalanine 10–glutamate 96 is the MtN3/slv 1 domain. Residues proline 29–glycine 42 lie on the Cytoplasmic side of the membrane. The helical transmembrane segment at phenylalanine 43–isoleucine 63 threads the bilayer. Over methionine 64 to tyrosine 69 the chain is Extracellular. A helical membrane pass occupies residues leucine 70–isoleucine 90. At leucine 91 to lysine 103 the chain is on the cytoplasmic side. A helical transmembrane segment spans residues leucine 104–valine 124. The Extracellular portion of the chain corresponds to proline 125 to serine 131. Residues threonine 132–methionine 152 form a helical membrane-spanning segment. Residues threonine 132–threonine 216 form the MtN3/slv 2 domain. The Cytoplasmic portion of the chain corresponds to arginine 153–proline 165. The chain crosses the membrane as a helical span at residues phenylalanine 166–isoleucine 186. The Extracellular segment spans residues lysine 187–lysine 189. Residues phenylalanine 190–methionine 210 form a helical membrane-spanning segment. Topologically, residues methionine 211–lysine 258 are cytoplasmic.

The protein belongs to the SWEET sugar transporter family. As to quaternary structure, forms heterooligomers with SWEET1, SWEET5, SWEET8, SWEET11, SWEET13, SWEET16 and SWEET17. In terms of tissue distribution, specifically expressed in nectaries, mostly in the lower half of nectary parenchyma.

Its subcellular location is the cell membrane. The protein localises to the cytoplasmic vesicle membrane. It localises to the golgi apparatus. The protein resides in the trans-Golgi network membrane. Its function is as follows. Mediates both low-affinity uptake and efflux of sugar across the plasma membrane. Nectary-specific sugar transporter required for nectar production by mediating the secretion of sucrose from the nectary parenchyma to the extracellular space. The sequence is that of Bidirectional sugar transporter SWEET9 from Arabidopsis thaliana (Mouse-ear cress).